The primary structure comprises 598 residues: Nuclear receptor subfamily 4immunitygroup A member 1 (598 aa).

Disordered stretches follow at residues M1 to P44, Y131 to F158, L177 to P206, and G221 to G265. Residues S134–S145 show a composition bias toward low complexity. The required for nuclear import stretch occupies residues R171–S466. The segment at residues E264 to T339 is a DNA-binding region (nuclear receptor). 2 consecutive NR C4-type zinc fingers follow at residues C267–C287 and C303–C327. Positions A268–K354 are required for binding NBRE-containing DNA. Positions A299–P361 are required for the interaction with RXRA. S341 bears the Phosphoserine; by PKA mark. Residues S341–P361 form a disordered region. Residue S351 is modified to Phosphoserine. Positions S360 to T595 constitute an NR LBD domain. Residues P521 to G544 are binds lipopolysaccharide. An AF-2 region spans residues P584–T595.

It belongs to the nuclear hormone receptor family. NR4 subfamily. As to quaternary structure, binds the NGFI-B response element (NBRE) as a monomer. Binds the Nur response element (NurRE), consisting of two inverse NBRE-related octanucleotide repeats separated by 6 base-pairs, as a dimer. Interacts (via N-terminus) with NLRP3 (via LRR repeat domain); the interaction is direct, requires binding of NR4A1/Nur77 to NBRE-containing dsDNA and lipopolysaccharide, and leads to non-canonical NLRP3 inflammasome activation. Interacts with GADD45GIP1. Interacts with STK11. Interacts with IFI27. Heterodimer (via DNA-binding domain) with RXRA (via C-terminus); DNA-binding of the heterodimer is enhanced by 9-cis retinoic acid. Competes for the RXRA interaction with EP300 and thereby attenuates EP300 mediated acetylation of RXRA. Interacts with NCOA1. Interacts with NCOA2. Interacts with NCOA3. Zn(2+) serves as cofactor. In terms of processing, phosphorylated at Ser-351 by RPS6KA1 and RPS6KA3 in response to mitogenic or stress stimuli. Acetylated by p300/CBP, acetylation increases stability. Deacetylated by HDAC1. In terms of tissue distribution, fetal muscle and adult liver, brain and thyroid.

Its subcellular location is the nucleus. It is found in the cytoplasm. It localises to the cytosol. The protein localises to the mitochondrion. Its activity is regulated as follows. Its transcription factor activity is activated by binding cytosporone B (Csn-B) via its ligand-binding (NR LBD) domain and stimulates recruitment of coactivators NCOA1 and NCOA2, but not NCOA3, to promoters. Csn-B-binding is also accompanied by its translocation to the mitochondrion. Its transcription factor activity is activated by corticotropin-releasing hormone (CRH) and forskolin. Not activated by binding cytosporone C (Csn-C). Orphan nuclear receptor. Binds the NGFI-B response element (NBRE) 5'-AAAGGTCA-3'. Binds 9-cis-retinoic acid outside of its ligand-binding (NR LBD) domain. Participates in energy homeostasis by sequestrating the kinase STK11 in the nucleus, thereby attenuating cytoplasmic AMPK activation. Regulates the inflammatory response in macrophages by regulating metabolic adaptations during inflammation, including repressing the transcription of genes involved in the citric acid cycle (TCA). Inhibits NF-kappa-B signaling by binding to low-affinity NF-kappa-B binding sites, such as at the IL2 promoter. May act concomitantly with NR4A2 in regulating the expression of delayed-early genes during liver regeneration. Plays a role in the vascular response to injury. Functionally, in the cytosol, upon its detection of both bacterial lipopolysaccharide (LPS) and NBRE-containing mitochondrial DNA released by GSDMD pores during pyroptosis, it promotes non-canonical NLRP3 inflammasome activation by stimulating association of NLRP3 and NEK7. This is Nuclear receptor subfamily 4immunitygroup A member 1 (NR4A1) from Homo sapiens (Human).